The chain runs to 163 residues: Large ribosomal subunit protein uL10 (163 aa).

The protein belongs to the universal ribosomal protein uL10 family. Part of the ribosomal stalk of the 50S ribosomal subunit. The N-terminus interacts with L11 and the large rRNA to form the base of the stalk. The C-terminus forms an elongated spine to which L12 dimers bind in a sequential fashion forming a multimeric L10(L12)X complex.

Functionally, forms part of the ribosomal stalk, playing a central role in the interaction of the ribosome with GTP-bound translation factors. In Histophilus somni (strain 129Pt) (Haemophilus somnus), this protein is Large ribosomal subunit protein uL10.